The chain runs to 249 residues: tRNA (guanine-N(1)-)-methyltransferase (249 aa).

Residues glycine 112 and 132–137 (LGDFVL) each bind S-adenosyl-L-methionine.

Belongs to the RNA methyltransferase TrmD family. In terms of assembly, homodimer.

The protein localises to the cytoplasm. The catalysed reaction is guanosine(37) in tRNA + S-adenosyl-L-methionine = N(1)-methylguanosine(37) in tRNA + S-adenosyl-L-homocysteine + H(+). Functionally, specifically methylates guanosine-37 in various tRNAs. The chain is tRNA (guanine-N(1)-)-methyltransferase from Citrifermentans bemidjiense (strain ATCC BAA-1014 / DSM 16622 / JCM 12645 / Bem) (Geobacter bemidjiensis).